The following is a 122-amino-acid chain: Large ribosomal subunit protein bL12 (122 aa).

It belongs to the bacterial ribosomal protein bL12 family. In terms of assembly, homodimer. Part of the ribosomal stalk of the 50S ribosomal subunit. Forms a multimeric L10(L12)X complex, where L10 forms an elongated spine to which 2 to 4 L12 dimers bind in a sequential fashion. Binds GTP-bound translation factors.

Functionally, forms part of the ribosomal stalk which helps the ribosome interact with GTP-bound translation factors. Is thus essential for accurate translation. This chain is Large ribosomal subunit protein bL12, found in Clostridium botulinum (strain Langeland / NCTC 10281 / Type F).